The chain runs to 541 residues: Chaperonin GroEL 1 (541 aa).

Residues 29–32 (TLGP), 86–90 (DGTTT), glycine 413, 479–481 (NAA), and aspartate 495 each bind ATP.

It belongs to the chaperonin (HSP60) family. In terms of assembly, forms a cylinder of 14 subunits composed of two heptameric rings stacked back-to-back. Interacts with the co-chaperonin GroES.

It is found in the cytoplasm. It carries out the reaction ATP + H2O + a folded polypeptide = ADP + phosphate + an unfolded polypeptide.. Together with its co-chaperonin GroES, plays an essential role in assisting protein folding. The GroEL-GroES system forms a nano-cage that allows encapsulation of the non-native substrate proteins and provides a physical environment optimized to promote and accelerate protein folding. This Synechocystis sp. (strain ATCC 27184 / PCC 6803 / Kazusa) protein is Chaperonin GroEL 1.